Consider the following 629-residue polypeptide: Proteoglycan Cow (629 aa).

Residues 1–27 (MKHSPLIASACLALVLMSSSLIGSTEA) form the signal peptide. 2 disordered regions span residues 118 to 186 (KRRV…ESKE) and 198 to 223 (GDKQ…DDDE). Residues 128-143 (DSQDAEDINNDDEDNS) are compositionally biased toward acidic residues. Asn-142 carries N-linked (GlcNAc...) asparagine glycosylation. Low complexity predominate over residues 144-159 (SDGGSSNSSPTGTNNA). Positions 167–186 (EETDDEDKSLSLGDDDESKE) are enriched in acidic residues. Positions 222 to 273 (DEELDNCKPCPVAKPTFLCGADNRTYSSLCRLDYHNCIHSTSIRIACKGFCP) constitute a Kazal-like domain. Cystine bridges form between Cys-228/Cys-258, Cys-231/Cys-251, and Cys-240/Cys-272. The N-linked (GlcNAc...) asparagine glycan is linked to Asn-244. Residues 298–356 (SLDQQQQQQQQQQQQQQQQQAYKDSNNNNIMMNSGNIMGGNNNDFNTIMNDKEDNNRHN) form a disordered region. The segment covering 301–340 (QQQQQQQQQQQQQQQQQAYKDSNNNNIMMNSGNIMGGNNN) has biased composition (low complexity). 2 consecutive EF-hand domains span residues 468–503 (ACKT…QNER) and 508–535 (FIDT…TDRP). Ca(2+)-binding residues include Asp-481, Asn-483, Asp-485, Gln-487, and Glu-492. One can recognise a Thyroglobulin type-1 domain in the interval 533-594 (DRPCAAVRRR…NTRTRGKPNC (62 aa)). Disulfide bonds link Cys-536–Cys-555, Cys-566–Cys-573, and Cys-575–Cys-594. Positions 602 to 629 (ASLTSDDEDEGADDEDSAEGSADQMLVF) are disordered. Acidic residues predominate over residues 606 to 619 (SDDEDEGADDEDSA). Residues 620–629 (EGSADQMLVF) show a composition bias toward low complexity.

In terms of assembly, interacts (in heparan sulfate-bound form) with wg. In terms of processing, contains heparan sulfate O-linked oligosaccharides. In terms of tissue distribution, in the wing disk, detected throughout the disk where it is localized primarily to the apical surface but is also present at the basal surface (at protein level).

It localises to the secreted. Binds to the Wnt signaling protein wg, stabilizes it and promotes its extracellular distribution. This is required for establishment of a wg gradient during development to allow for regulation of target genes at different levels. This is Proteoglycan Cow from Drosophila melanogaster (Fruit fly).